The sequence spans 486 residues: F420-non-reducing hydrogenase iron-sulfur subunit A (486 aa).

Ni(2+)-binding residues include cysteine 61 and cysteine 64.

Belongs to the [NiFe]/[NiFeSe] hydrogenase large subunit family. In terms of assembly, the F420-non-reducing hydrogenase is composed of three subunits; MvhA, MvhD and MvhG. It forms a complex with the heterodisulfide reductase (Hdr). Ni(2+) serves as cofactor.

Its subcellular location is the cytoplasm. Part of a complex that provides reducing equivalents for heterodisulfide reductase. The protein is F420-non-reducing hydrogenase iron-sulfur subunit A (mvhA) of Archaeoglobus profundus (strain DSM 5631 / JCM 9629 / NBRC 100127 / Av18).